The chain runs to 404 residues: Advanced glycosylation end product-specific receptor (404 aa).

The first 22 residues, 1–22 (MAAGTAVGAWVLVLSLWGAVVG), serve as a signal peptide directing secretion. Residues 23–116 (AQNITARIGE…KETKSNYRVR (94 aa)) form the Ig-like V-type domain. Residues 23-342 (AQNITARIGE…VGGSGLGTLA (320 aa)) are Extracellular-facing. Residues Asn-25 and Asn-81 are each glycosylated (N-linked (GlcNAc...) asparagine). 2 disulfide bridges follow: Cys-38–Cys-99 and Cys-144–Cys-208. 2 Ig-like C2-type domains span residues 124–221 (PEIV…RALR) and 227–317 (PRVW…RAVS). A helical transmembrane segment spans residues 343 to 363 (LALGILGGLGTAALLIGVILW). Residues 364-404 (QRRQRRGEERKAPENQEEEEERAELNQSEEPEAGESSTGGP) are Cytoplasmic-facing. The disordered stretch occupies residues 367-404 (QRRGEERKAPENQEEEEERAELNQSEEPEAGESSTGGP). The span at 378-396 (NQEEEEERAELNQSEEPEA) shows a compositional bias: acidic residues. Ser-391 is modified (phosphoserine; by PKC/PRKCZ and ATM).

Constitutive homodimer; disulfide-linked. Forms homooligomers. Interacts with S100A1 and APP. Interacts with S100B, S100A12 and S100A14. Interacts with TIRAP. Interacts with HMGB1. Interacts with LGP2; this interaction plays an important role in AGER-mediated pro-inflammatory responses and cytokine release. Interacts with double-strand break repair protein MRE11 which is a core component of the MRN complex. The interaction enhances MRE11 endonuclease activity and promotes DNA repair. Interacts with the MCM2-7 complex via interaction with complex member MCM2; the interaction is increased following DNA replication stress and stabilizes the MCM2-7 complex at replication forks. Interacts with longistatin, a protein from the saliva of the tick, Haemaphysalis longicornis; the interaction attenuates AGER-mediated production of reactive oxygen species (ROS), activation of NF-kappa-B and expression of adhesion molecules and cytokines in human endothelial cells. Post-translationally, phosphorylated on its cytoplasmic domain by PKCzeta/PRKCZ upon ligand binding. Phosphorylated by ATM following DNA damage. Targeted by the ubiquitin E3 ligase subunit FBXO10 to mediate its ubiquitination and degradation. As to expression, endothelial cells. Increased expression in pre-term labor and preeclampsia placentas compared to controls.

The protein resides in the cell membrane. The protein localises to the cell projection. It localises to the phagocytic cup. Its subcellular location is the early endosome. It is found in the nucleus. The protein resides in the secreted. Its function is as follows. Cell surface pattern recognition receptor that senses endogenous stress signals with a broad ligand repertoire including advanced glycation end products, S100 proteins, high-mobility group box 1 protein/HMGB1, amyloid beta/APP oligomers, nucleic acids, histones, phospholipids and glycosaminoglycans. Advanced glycosylation end products are nonenzymatically glycosylated proteins which accumulate in vascular tissue in aging and at an accelerated rate in diabetes. These ligands accumulate at inflammatory sites during the pathogenesis of various diseases including diabetes, vascular complications, neurodegenerative disorders and cancers, and RAGE transduces their binding into pro-inflammatory responses. Upon ligand binding, uses TIRAP and MYD88 as adapters to transduce the signal ultimately leading to the induction of inflammatory cytokines IL6, IL8 and TNFalpha through activation of NF-kappa-B. Interaction with S100A12 on endothelium, mononuclear phagocytes, and lymphocytes triggers cellular activation, with generation of key pro-inflammatory mediators. Interaction with S100B after myocardial infarction may play a role in myocyte apoptosis by activating ERK1/2 and p53/TP53 signaling. Contributes to the translocation of amyloid-beta peptide (ABPP) across the cell membrane from the extracellular to the intracellular space in cortical neurons. ABPP-initiated RAGE signaling, especially stimulation of p38 mitogen-activated protein kinase (MAPK), has the capacity to drive a transport system delivering ABPP as a complex with RAGE to the intraneuronal space. Participates in endothelial albumin transcytosis together with HMGB1 through the RAGE/SRC/Caveolin-1 pathway, leading to endothelial hyperpermeability. Mediates the loading of HMGB1 in extracellular vesicles (EVs) that shuttle HMGB1 to hepatocytes by transferrin-mediated endocytosis and subsequently promote hepatocyte pyroptosis by activating the NLRP3 inflammasome. Binds to DNA and promotes extracellular hypomethylated DNA (CpG DNA) uptake by cells via the endosomal route to activate inflammatory responses. Mediates phagocytosis by non-professional phagocytes (NPP) and this is enhanced by binding to ligands including RNA, DNA, HMGB1 and histones. Promotes NPP-mediated phagocytosis of Saccharomyces cerevisiae spores by binding to RNA attached to the spore wall. Also promotes NPP-mediated phagocytosis of apoptotic cells. Following DNA damage, recruited to DNA double-strand break sites where it colocalizes with the MRN repair complex via interaction with double-strand break repair protein MRE11. Enhances the endonuclease activity of MRE11, promoting the end resection of damaged DNA. Promotes DNA damage repair in trophoblasts which enhances trophoblast invasion and contributes to placental development and maintenance. Protects cells from DNA replication stress by localizing to damaged replication forks where it stabilizes the MCM2-7 complex and promotes faithful progression of the replication fork. Mediates the production of reactive oxygen species (ROS) in human endothelial cells. This chain is Advanced glycosylation end product-specific receptor (AGER), found in Homo sapiens (Human).